Here is a 130-residue protein sequence, read N- to C-terminus: Prefoldin subunit alpha (130 aa).

This sequence belongs to the prefoldin subunit alpha family. As to quaternary structure, heterohexamer of two alpha and four beta subunits.

The protein localises to the cytoplasm. Its function is as follows. Molecular chaperone capable of stabilizing a range of proteins. Seems to fulfill an ATP-independent, HSP70-like function in archaeal de novo protein folding. This is Prefoldin subunit alpha (pfdA) from Thermoplasma acidophilum (strain ATCC 25905 / DSM 1728 / JCM 9062 / NBRC 15155 / AMRC-C165).